The primary structure comprises 243 residues: Cysteine-rich secretory protein 2 (243 aa).

Positions 1-21 (MALLPVLFLVTVLLPSLPAEG) are cleaved as a signal peptide. Residues 41–169 (VNKHNELRKA…SLKYYYVCQY (129 aa)) form the SCP domain. Intrachain disulfides connect cysteine 189/cysteine 196, cysteine 192/cysteine 201, cysteine 205/cysteine 238, cysteine 214/cysteine 232, and cysteine 223/cysteine 236. The 34-residue stretch at 205–238 (CQYQDLLSNCDSLKNTAGCEHELLKEKCKATCLC) folds into the ShKT domain.

This sequence belongs to the CRISP family. In terms of assembly, interacts with NSUN4 isoform 3. In terms of tissue distribution, testis and epididymis.

It localises to the secreted. Its function is as follows. May regulate some ion channels' activity and thereby regulate calcium fluxes during sperm capacitation. In Homo sapiens (Human), this protein is Cysteine-rich secretory protein 2 (CRISP2).